The sequence spans 297 residues: Trimeric intracellular cation channel type A (297 aa).

At 1–18 (MDLISSLSLGELALSFSR) the chain is on the lumenal side. A helical transmembrane segment spans residues 19 to 39 (VPLFPVFDLSYFIVSIIYLKY). The Cytoplasmic segment spans residues 40–51 (EPGSVELSRRHP). The chain crosses the membrane as a helical span at residues 52–72 (VASWLCAMLHCFGSYILADLL). Residues 73 to 85 (LGEPIIDYFSNSS) lie on the Lumenal side of the membrane. G74 contacts Ca(2+). The chain crosses the membrane as a helical span at residues 86–106 (SILLASGVWYLIFFCPLDLFY). Over 107–143 (KCVCFLPVKLIFVAMKEVVRVRKIAVGIHHAHHYHHG) the chain is Cytoplasmic. A 1,2-diacyl-sn-glycero-3-phospho-(1D-myo-inositol-4,5-bisphosphate) contacts are provided by K122 and R126. A helical transmembrane segment spans residues 144 to 164 (WFIMIATGWVKGSGVALLSNL). The Lumenal segment spans residues 165–177 (EQLLRGVWKPETN). Residues 178 to 198 (EILHMSFPTKASLYGAILFTL) traverse the membrane as a helical segment. The Cytoplasmic segment spans residues 199–208 (QQTRWLPVSK). Residues 209-229 (ASLIFVFTMFMVSCKVFLTAT) form a helical membrane-spanning segment. Residues 230-233 (HSHS) are Lumenal-facing. Residues 234 to 254 (SPFDVLEGYICPVLFGATWGG) form a helical membrane-spanning segment. At 255-297 (DHHHDNHGAPHGMGLGTQHSGLPAKAKEELSEGFRKKKTKKAD) the chain is on the cytoplasmic side. A disordered region spans residues 259 to 297 (DNHGAPHGMGLGTQHSGLPAKAKEELSEGFRKKKTKKAD). Residues 279-288 (KAKEELSEGF) show a composition bias toward basic and acidic residues.

It belongs to the TMEM38 family. As to quaternary structure, homotrimer; conformation seems to be controled by binding to diacylglycerol (DAG).

It is found in the sarcoplasmic reticulum membrane. The protein resides in the nucleus membrane. It carries out the reaction K(+)(in) = K(+)(out). With respect to regulation, channel activity is activated by a change of voltage within the sarcoplasmic reticulum lumen and blocked by luminal high Ca(2+) levels. Its function is as follows. Intracellular monovalent cation channel required for maintenance of rapid intracellular calcium release. Acts as a potassium counter-ion channel that functions in synchronization with calcium release from intracellular stores. Opened by a change of voltage within the sarcoplasmic reticulum lumen. This is Trimeric intracellular cation channel type A from Rattus norvegicus (Rat).